We begin with the raw amino-acid sequence, 379 residues long: Pectin lyase A (379 aa).

The signal sequence occupies residues 1–20; the sequence is MKYSTIFSAAAAVFAGSAAA. 2 disulfides stabilise this stretch: C83/C102 and C92/C226. Residue T88 is glycosylated (O-linked (Man) threonine). An N-linked (GlcNAc...) asparagine glycan is attached at N129. R256 is an active-site residue. Cysteines 322 and 330 form a disulfide. S368 is a glycosylation site (O-linked (Man) serine; in strain 4M-147).

This sequence belongs to the polysaccharide lyase 1 family. In terms of processing, N-glycosylated at Asn-129 and O-glycosylated at Thr-88 when expressed in Aspergillus nidulans. The protein from strain 4M-147 is O-glycosylated at Thr-88 and Ser-368. PubMed:9195887 modeled GalNAc at the O-glycosylation site, a glycosylation not observed in fungi. The O-linked saccharide is probably mannose.

The protein resides in the secreted. The enzyme catalyses Eliminative cleavage of (1-&gt;4)-alpha-D-galacturonan methyl ester to give oligosaccharides with 4-deoxy-6-O-methyl-alpha-D-galact-4-enuronosyl groups at their non-reducing ends.. Its function is as follows. Pectinolytic enzymes consist of four classes of enzymes: pectin lyase, polygalacturonase, pectin methylesterase and rhamnogalacturonase. Among pectinolytic enzymes, pectin lyase is the most important in depolymerization of pectin, since it cleaves internal glycosidic bonds of highly methylated pectins. This chain is Pectin lyase A (pelA), found in Aspergillus niger.